A 1174-amino-acid polypeptide reads, in one-letter code: MENNIQNQCVPYNCLNNPEVEILNEERSTGRLPLDISLSLTRFLLSEFVPGVGVAFGLFDLIWGFITPSDWSLFLLQIEQLIEQRIETLERNRAITTLRGLADSYEIYIEALREWEANPNNAQLREDVRIRFANTDDALITAINNFTLTSFEIPLLSVYVQAANLHLSLLRDAVSFGQGWGLDIATVNNHYNRLINLIHRYTKHCLDTYNQGLENLRGTNTRQWARFNQFRRDLTLTVLDIVALFPNYDVRTYPIQTSSQLTREIYTSSVIEDSPVSANIPNGFNRAEFGVRPPHLMDFMNSLFVTAETVRSQTVWGGHLVSSRNTAGNRINFPSYGVFNPGGAIWIADEDPRPFYRTLSDPVFVRGGFGNPHYVLGLRGVAFQQTGTNHTRTFRNSGTIDSLDEIPPQDNSGAPWNDYSHVLNHVTFVRWPGEISGSDSWRAPMFSWTHRSATPTNTIDPERITQIPLVKAHTLQSGTTVVRGPGFTGGDILRRTSGGPFAYTIVNINGQLPQRYRARIRYASTTNLRIYVTVAGERIFAGQFNKTMDTGDPLTFQSFSYATINTAFTFPMSQSSFTVGADTFSSGNEVYIDRFELIPVTATFEAEYDLERAQKAVNALFTSINQIGIKTDVTDYHIDQVSNLVDCLSDEFCLDEKRELSEKVKHAKRLSDERNLLQDPNFKGINRQLDRGWRGSTDITIQRGDDVFKENYVTLPGTFDECYPTYLYQKIDESKLKPYTRYQLRGYIEDSQDLEIYLIRYNAKHETVNVLGTGSLWPLSVQSPIRKCGEPNRCAPHLEWNPDLDCSCRDGEKCAHHSHHFSLDIDVGCTDLNEDLDVWVIFKIKTQDGHARLGNLEFLEEKPLVGEALARVKRAEKKWRDKREKLELETNIVYKEAKESVDALFVNSQYDQLQADTNIAMIHAADKRVHRIREAYLPELSVIPGVNVDIFEELKGRIFTAFFLYDARNVIKNGDFNNGLSCWNVKGHVDVEEQNNHRSVLVVPEWEAEVSQEVRVCPGRGYILRVTAYKEGYGEGCVTIHEIENNTDELKFSNCVEEEVYPNNTVTCNDYTANQEEYGGAYTSRNRGYDETYGSNSSVPADYASVYEEKSYTDGRRDNPCESNRGYGDYTPLPAGYVTKELEYFPETDKVWIEIGETEGTFIVDSVELLLMEE.

The protein belongs to the delta endotoxin family.

Its function is as follows. Promotes colloidosmotic lysis by binding to the midgut epithelial cells of many lepidopteran larvae. The sequence is that of Pesticidal crystal protein Cry1Fa (cry1Fa) from Bacillus thuringiensis subsp. aizawai.